The following is a 94-amino-acid chain: DNA-directed RNA polymerase subunit Rpo11 (94 aa).

It belongs to the archaeal Rpo11/eukaryotic RPB11/RPC19 RNA polymerase subunit family. Part of the RNA polymerase complex.

Its subcellular location is the cytoplasm. The catalysed reaction is RNA(n) + a ribonucleoside 5'-triphosphate = RNA(n+1) + diphosphate. DNA-dependent RNA polymerase (RNAP) catalyzes the transcription of DNA into RNA using the four ribonucleoside triphosphates as substrates. The polypeptide is DNA-directed RNA polymerase subunit Rpo11 (Halobacterium salinarum (strain ATCC 700922 / JCM 11081 / NRC-1) (Halobacterium halobium)).